The chain runs to 202 residues: uncharacterized protein (202 aa).

This sequence belongs to the NAD(P)H dehydrogenase (quinone) family.

This is an uncharacterized protein from Haemophilus influenzae (strain ATCC 51907 / DSM 11121 / KW20 / Rd).